Here is a 395-residue protein sequence, read N- to C-terminus: Protein UNIFOLIATA (395 aa).

Disordered regions lie at residues 147-170 (SQEGLSEEPVVQREKEAMGSGGGS) and 185-223 (QIRRRRMKMKGNDHGENEEGEEEEEDNISGGGVGGGERQ). A compositionally biased stretch (acidic residues) spans 202–211 (EEGEEEEEDN). 3 consecutive DNA-binding regions follow at residues 224–228 (REHPF), 293–300 (NKPKMRHY), and 364–367 (YGPT).

Belongs to the FLO/LFY family. As to expression, highly expressed in leaf, leaflet, inflorescence and lateral shoot primordia on the main shoot axis, and in floral organ and carpel primordia.

It is found in the nucleus. Functionally, may regulate indeterminacy during leaf and flower development. This chain is Protein UNIFOLIATA (UNI), found in Pisum sativum (Garden pea).